A 135-amino-acid chain; its full sequence is Snaclec echicetin subunit alpha (135 aa).

Positions 1–4 (GADE) are cleaved as a signal peptide. 3 cysteine pairs are disulfide-bonded: C6/C17, C34/C129, and C104/C121. The region spanning 13–130 (NGVYCYMLFK…CENTFPFMCK (118 aa)) is the C-type lectin domain.

It belongs to the snaclec family. As to quaternary structure, heterodimer of subunits alpha and beta; disulfide-linked. As to expression, expressed by the venom gland.

It localises to the secreted. In terms of biological role, binding of echicetin to GPIbalpha (GP1BA) receptor on platelets alone results in inhibition of platelet aggregation, while binding to both GP1BA receptor and IgMk promotes platelet aggregation and signal transduction. The chain is Snaclec echicetin subunit alpha from Echis carinatus (Saw-scaled viper).